Consider the following 35-residue polypeptide: Photosystem II reaction center protein T (35 aa).

Residues 3-23 traverse the membrane as a helical segment; the sequence is SVAYILIFTLCIGTIFFAIAF.

The protein belongs to the PsbT family. PSII is composed of 1 copy each of membrane proteins PsbA, PsbB, PsbC, PsbD, PsbE, PsbF, PsbH, PsbI, PsbJ, PsbK, PsbL, PsbM, PsbT, PsbX, PsbY, PsbZ, Psb30/Ycf12, peripheral proteins PsbO, CyanoQ (PsbQ), PsbU, PsbV and a large number of cofactors. It forms dimeric complexes.

The protein localises to the cellular thylakoid membrane. In terms of biological role, found at the monomer-monomer interface of the photosystem II (PS II) dimer, plays a role in assembly and dimerization of PSII. PSII is a light-driven water plastoquinone oxidoreductase, using light energy to abstract electrons from H(2)O, generating a proton gradient subsequently used for ATP formation. This is Photosystem II reaction center protein T from Nostoc punctiforme (strain ATCC 29133 / PCC 73102).